A 132-amino-acid polypeptide reads, in one-letter code: Agouti-signaling protein (132 aa).

Positions 1–22 (MDVTRLLLATLLVFLCFFTAYS) are cleaved as a signal peptide. N-linked (GlcNAc...) asparagine glycosylation is present at Asn-39. A disordered region spans residues 57-88 (KKSKQTSRKEAEKKRSSKKEASMKKVARPRTP). The span at 63–79 (SRKEAEKKRSSKKEASM) shows a compositional bias: basic and acidic residues. Intrachain disulfides connect Cys-93–Cys-108, Cys-100–Cys-114, Cys-107–Cys-125, Cys-111–Cys-132, and Cys-116–Cys-123. One can recognise an Agouti domain in the interval 93–132 (CVATRDSCKPPAPACCDPCASCQCRFFRSACSCRVLSLNC).

The protein localises to the secreted. Its function is as follows. Involved in the regulation of melanogenesis. The binding of ASP to MC1R precludes alpha-MSH initiated signaling and thus blocks production of cAMP, leading to a down-regulation of eumelanogenesis (brown/black pigment) and thus increasing synthesis of pheomelanin (yellow/red pigment). This Macaca assamensis (Assam macaque) protein is Agouti-signaling protein (ASIP).